Consider the following 91-residue polypeptide: Small ribosomal subunit protein uS15 (91 aa).

It belongs to the universal ribosomal protein uS15 family. Part of the 30S ribosomal subunit. Forms a bridge to the 50S subunit in the 70S ribosome, contacting the 23S rRNA.

Its function is as follows. One of the primary rRNA binding proteins, it binds directly to 16S rRNA where it helps nucleate assembly of the platform of the 30S subunit by binding and bridging several RNA helices of the 16S rRNA. Forms an intersubunit bridge (bridge B4) with the 23S rRNA of the 50S subunit in the ribosome. The chain is Small ribosomal subunit protein uS15 from Rickettsia canadensis (strain McKiel).